The sequence spans 229 residues: C-&gt;U-editing enzyme APOBEC-1 (229 aa).

The 125-residue stretch at 10 to 134 (VDPTLRRRIE…QRNRQGLRDL (125 aa)) folds into the CMP/dCMP-type deaminase domain. His61 is a Zn(2+) binding site. The active-site Proton donor is Glu63. 2 residues coordinate Zn(2+): Cys93 and Cys96.

It belongs to the cytidine and deoxycytidylate deaminase family. As to quaternary structure, homodimer. Interacts with A1CF; form an mRNA editing complex. Interacts with RBM47; form an mRNA editing complex. Found in a complex with CELF2/CUGBP2 and A1CF. Interacts with HNRPAB. Interacts with SYNCRIP. Zn(2+) is required as a cofactor. As to expression, expressed in the spleen. Expressed at lower level in the kidney, testis, lung, brain and liver.

It localises to the cytoplasm. It is found in the nucleus. It carries out the reaction a cytidine in mRNA + H2O + H(+) = a uridine in mRNA + NH4(+). It catalyses the reaction cytidine(6666) in apoB mRNA + H2O + H(+) = uridine(6666) in apoB mRNA + NH4(+). In terms of biological role, cytidine deaminase catalyzing the cytidine to uridine postranscriptional editing of a variety of mRNAs. Form complexes with cofactors that confer differential editing activity and selectivity. Responsible for the postranscriptional editing of a CAA codon for Gln to a UAA codon for stop in the apolipoprotein B mRNA. Also involved in CGA (Arg) to UGA (Stop) editing in the NF1 mRNA. May also play a role in the epigenetic regulation of gene expression by participating in DNA demethylation. The protein is C-&gt;U-editing enzyme APOBEC-1 of Mus musculus (Mouse).